A 237-amino-acid polypeptide reads, in one-letter code: Pyridoxine 5'-phosphate synthase (237 aa).

Positions 7 and 18 each coordinate 3-amino-2-oxopropyl phosphate. Catalysis depends on histidine 43, which acts as the Proton acceptor. 1-deoxy-D-xylulose 5-phosphate-binding residues include arginine 45 and histidine 50. Glutamate 70 (proton acceptor) is an active-site residue. Threonine 100 lines the 1-deoxy-D-xylulose 5-phosphate pocket. Histidine 190 (proton donor) is an active-site residue. 3-amino-2-oxopropyl phosphate-binding positions include aspartate 191 and 213-214 (GH).

This sequence belongs to the PNP synthase family. As to quaternary structure, homooctamer; tetramer of dimers.

The protein localises to the cytoplasm. It catalyses the reaction 3-amino-2-oxopropyl phosphate + 1-deoxy-D-xylulose 5-phosphate = pyridoxine 5'-phosphate + phosphate + 2 H2O + H(+). It functions in the pathway cofactor biosynthesis; pyridoxine 5'-phosphate biosynthesis; pyridoxine 5'-phosphate from D-erythrose 4-phosphate: step 5/5. Catalyzes the complicated ring closure reaction between the two acyclic compounds 1-deoxy-D-xylulose-5-phosphate (DXP) and 3-amino-2-oxopropyl phosphate (1-amino-acetone-3-phosphate or AAP) to form pyridoxine 5'-phosphate (PNP) and inorganic phosphate. The chain is Pyridoxine 5'-phosphate synthase from Bacteroides fragilis (strain ATCC 25285 / DSM 2151 / CCUG 4856 / JCM 11019 / LMG 10263 / NCTC 9343 / Onslow / VPI 2553 / EN-2).